The primary structure comprises 146 residues: 3-hydroxyacyl-[acyl-carrier-protein] dehydratase FabZ (146 aa).

Residue histidine 49 is part of the active site.

Belongs to the thioester dehydratase family. FabZ subfamily.

It is found in the cytoplasm. The catalysed reaction is a (3R)-hydroxyacyl-[ACP] = a (2E)-enoyl-[ACP] + H2O. In terms of biological role, involved in unsaturated fatty acids biosynthesis. Catalyzes the dehydration of short chain beta-hydroxyacyl-ACPs and long chain saturated and unsaturated beta-hydroxyacyl-ACPs. This is 3-hydroxyacyl-[acyl-carrier-protein] dehydratase FabZ from Pseudomonas syringae pv. tomato (strain ATCC BAA-871 / DC3000).